Reading from the N-terminus, the 443-residue chain is Sensor histidine protein kinase HK06 (443 aa).

Helical transmembrane passes span 16 to 36 (FAILGGVGLVIHIAIYLTFPF) and 140 to 160 (ILLLYLPYTFLVTIAFSFVFS). Positions 165–217 (KRLLNPLFYISEVTSKMQDLDDNIRFDESRKDEVGEVGKQINGMYEHLLKVIH) constitute an HAMP domain. One can recognise a Histidine kinase domain in the interval 239 to 443 (GASHELKTPL…EHGMEFKISL (205 aa)). His242 is subject to Phosphohistidine; by autocatalysis.

Its subcellular location is the cell membrane. The enzyme catalyses ATP + protein L-histidine = ADP + protein N-phospho-L-histidine.. Functionally, member of the two-component regulatory system HK06/RR06 involved in regulation of target genes, including choline-binding protein CbpA. Has been shown in one study to not be required for regulation of expression of choline-binding protein CbpA. This is Sensor histidine protein kinase HK06 from Streptococcus pneumoniae serotype 2 (strain D39 / NCTC 7466).